The following is a 315-amino-acid chain: Cobalamin biosynthesis protein CobD (315 aa).

7 helical membrane-spanning segments follow: residues 1-21 (MLDI…YWFP), 50-70 (VFGG…PFII), 79-99 (VIYH…KSLH), 151-171 (DGII…AMMY), 209-229 (VTGI…FYSI), 250-270 (AAAA…GEVV), and 291-311 (IILM…IICF).

Belongs to the CobD/CbiB family.

The protein resides in the cell membrane. Its pathway is cofactor biosynthesis; adenosylcobalamin biosynthesis. Converts cobyric acid to cobinamide by the addition of aminopropanol on the F carboxylic group. In Clostridium acetobutylicum (strain ATCC 824 / DSM 792 / JCM 1419 / IAM 19013 / LMG 5710 / NBRC 13948 / NRRL B-527 / VKM B-1787 / 2291 / W), this protein is Cobalamin biosynthesis protein CobD.